A 303-amino-acid polypeptide reads, in one-letter code: Probable 5-dehydro-4-deoxyglucarate dehydratase (303 aa).

The protein belongs to the DapA family.

It catalyses the reaction 5-dehydro-4-deoxy-D-glucarate + H(+) = 2,5-dioxopentanoate + CO2 + H2O. It participates in carbohydrate acid metabolism; D-glucarate degradation; 2,5-dioxopentanoate from D-glucarate: step 2/2. This chain is Probable 5-dehydro-4-deoxyglucarate dehydratase, found in Pseudomonas fluorescens (strain Pf0-1).